We begin with the raw amino-acid sequence, 322 residues long: 2-oxoglutarate-dependent dioxygenase caaD (322 aa).

The Fe2OG dioxygenase domain occupies 172 to 279 (TGNAAMFLKL…FAVPAFWHGD (108 aa)). Fe cation contacts are provided by histidine 200, aspartate 202, and histidine 259. Arginine 269 is a 2-oxoglutarate binding site.

The protein belongs to the iron/ascorbate-dependent oxidoreductase family. It depends on Fe(2+) as a cofactor.

The protein operates within secondary metabolite biosynthesis. Its function is as follows. 2-oxoglutarate-dependent dioxygenase; part of the gene cluster that produces the acyltetronic acid derivatives carlosic acid, agglomerin F and carlosic acid methyl ether. CaaD catalyzes the sequential oxidations of the terminal C-10 methyl group of the caaC product to form carboxylic acid which is necessary for the biosynthesis of agglomerin F. The protein is 2-oxoglutarate-dependent dioxygenase caaD of Aspergillus niger (strain ATCC MYA-4892 / CBS 513.88 / FGSC A1513).